Here is a 316-residue protein sequence, read N- to C-terminus: tRNA dimethylallyltransferase (316 aa).

9–16 contacts ATP; the sequence is GPTASGKS. Position 11-16 (11-16) interacts with substrate; that stretch reads TASGKS. Interaction with substrate tRNA regions lie at residues 34 to 37 and 158 to 162; these read DSMQ and QRLAR.

The protein belongs to the IPP transferase family. In terms of assembly, monomer. It depends on Mg(2+) as a cofactor.

The enzyme catalyses adenosine(37) in tRNA + dimethylallyl diphosphate = N(6)-dimethylallyladenosine(37) in tRNA + diphosphate. In terms of biological role, catalyzes the transfer of a dimethylallyl group onto the adenine at position 37 in tRNAs that read codons beginning with uridine, leading to the formation of N6-(dimethylallyl)adenosine (i(6)A). In Hyphomonas neptunium (strain ATCC 15444), this protein is tRNA dimethylallyltransferase.